Reading from the N-terminus, the 1183-residue chain is Chromosome partition protein Smc (1183 aa).

Residue 32–39 (PNGCGKTN) coordinates ATP. Coiled coils occupy residues 167–322 (ITRY…ERLN) and 358–497 (AEFE…ALCN). The segment at 409-442 (KEHLEGSVNRLDQRKRDLERSMEQAEPERRRTSE) is disordered. A compositionally biased stretch (basic and acidic residues) spans 419 to 442 (LDQRKRDLERSMEQAEPERRRTSE). Residues 523–632 (LGCLSDLISV…VADLDAAEQL (110 aa)) form the SMC hinge domain. Coiled-coil stretches lie at residues 669-941 (GKKA…VMER) and 980-1025 (NELA…ALEK).

The protein belongs to the SMC family. As to quaternary structure, homodimer.

It is found in the cytoplasm. Required for chromosome condensation and partitioning. This chain is Chromosome partition protein Smc, found in Chlorobaculum tepidum (strain ATCC 49652 / DSM 12025 / NBRC 103806 / TLS) (Chlorobium tepidum).